The following is a 138-amino-acid chain: uncharacterized protein (138 aa).

A run of 3 helical transmembrane segments spans residues 12 to 32 (LHFL…VLPI), 62 to 82 (LIAV…FSVL), and 111 to 131 (FHWV…LICS).

The protein localises to the cell membrane. This is an uncharacterized protein from Haemophilus influenzae (strain ATCC 51907 / DSM 11121 / KW20 / Rd).